A 904-amino-acid chain; its full sequence is Protein translocase subunit SecA (904 aa).

ATP-binding positions include glutamine 89, glycine 107 to threonine 111, and aspartate 502. Zn(2+) is bound by residues cysteine 888, cysteine 890, cysteine 899, and histidine 900.

The protein belongs to the SecA family. In terms of assembly, monomer and homodimer. Part of the essential Sec protein translocation apparatus which comprises SecA, SecYEG and auxiliary proteins SecDF-YajC and YidC. Requires Zn(2+) as cofactor.

Its subcellular location is the cell inner membrane. It is found in the cytoplasm. The enzyme catalyses ATP + H2O + cellular proteinSide 1 = ADP + phosphate + cellular proteinSide 2.. Functionally, part of the Sec protein translocase complex. Interacts with the SecYEG preprotein conducting channel. Has a central role in coupling the hydrolysis of ATP to the transfer of proteins into and across the cell membrane, serving both as a receptor for the preprotein-SecB complex and as an ATP-driven molecular motor driving the stepwise translocation of polypeptide chains across the membrane. The sequence is that of Protein translocase subunit SecA from Roseobacter denitrificans (strain ATCC 33942 / OCh 114) (Erythrobacter sp. (strain OCh 114)).